The sequence spans 189 residues: Batroxicidin (189 aa).

The N-terminal stretch at Met-1–Ala-22 is a signal peptide. A propeptide spanning residues His-23 to Val-155 is cleaved from the precursor. 2 cysteine pairs are disulfide-bonded: Cys-79/Cys-90 and Cys-101/Cys-118. Over residues Glu-125–Glu-148 the composition is skewed to acidic residues. Residues Glu-125 to Pro-152 are disordered.

The protein belongs to the cathelicidin family. As to expression, expressed by the venom gland.

It localises to the secreted. The protein localises to the target cell membrane. Its function is as follows. Potent antimicrobial peptide against Gram-negative (MIC=0.25 ug/ml against E.coli ATCC 25922, MIC=1 ug/ml against P.aeruginosa) and Gram-positive bacteria (MIC=32 ug/ml against E.faecalis, MIC=32 ug/ml against S.aureus). Adopts an amphipathic alpha helical conformation, that may allow to partition into the target membrane. Low hemolytic activities have been observed on mammalian cells. In addition, when tested in vitro on the parasite Trypanosoma cruzi (responsible of the Chagas disease), is able to reduce the number of the three forms (epimastigote, trypomastigote and amastigote) by inducing cell death through necrosis. The protein is Batroxicidin of Bothrops atrox (Barba amarilla).